The chain runs to 213 residues: Phosphatidylethanolamine N-methyltransferase A (213 aa).

Topologically, residues 1-21 (MIVEHAIDYIDYLMNYVDFTE) are lumenal. An intramembrane region (helical) is located at residues 22 to 42 (KYFLLTIACVVFNPTWWNITA). Over 43 to 54 (RMEYKTKFMTKI) the chain is Lumenal. Residues 55-75 (CGSKENGCYLLAFLIFSLGIL) form a helical membrane-spanning segment. Residues 76-102 (RDWLFSEALIRQPIFQEFDRFEVEVLS) are Cytoplasmic-facing. Residues 103–123 (YILYGFGGILVLAAYLKLGIT) traverse the membrane as a helical segment. 107-109 (GFG) contacts S-adenosyl-L-methionine. The Lumenal portion of the chain corresponds to 124-166 (GTYLGDYFGILMKERVTGFPFNVMNNPMYNGSVMLFIAHALSY). The chain crosses the membrane as a helical span at residues 167 to 187 (KSVAGLVLSFVVYVVYKFALI). The Cytoplasmic portion of the chain corresponds to 188–213 (FEESFTNYIYSTAAANAAKKNKSKSK). 189-190 (EE) contributes to the S-adenosyl-L-methionine binding site.

The protein belongs to the class VI-like SAM-binding methyltransferase superfamily. PEMT/PEM2 methyltransferase family.

Its subcellular location is the endoplasmic reticulum membrane. The protein localises to the mitochondrion membrane. The enzyme catalyses a 1,2-diacyl-sn-glycero-3-phospho-N-methylethanolamine + S-adenosyl-L-methionine = a 1,2-diacyl-sn-glycero-3-phospho-N,N-dimethylethanolamine + S-adenosyl-L-homocysteine + H(+). It catalyses the reaction a 1,2-diacyl-sn-glycero-3-phospho-N,N-dimethylethanolamine + S-adenosyl-L-methionine = a 1,2-diacyl-sn-glycero-3-phosphocholine + S-adenosyl-L-homocysteine + H(+). The catalysed reaction is a 1,2-diacyl-sn-glycero-3-phosphoethanolamine + S-adenosyl-L-methionine = a 1,2-diacyl-sn-glycero-3-phospho-N-methylethanolamine + S-adenosyl-L-homocysteine + H(+). It functions in the pathway phospholipid metabolism; phosphatidylcholine biosynthesis. Functionally, catalyzes the three sequential steps of the methylation pathway of phosphatidylcholine biosynthesis, the SAM-dependent methylation of phosphatidylethanolamine (PE) to phosphatidylmonomethylethanolamine (PMME), PMME to phosphatidyldimethylethanolamine (PDME), and PDME to phosphatidylcholine (PC). The polypeptide is Phosphatidylethanolamine N-methyltransferase A (pemtA) (Dictyostelium discoideum (Social amoeba)).